Consider the following 141-residue polypeptide: MAVNYETKATNTGGRNGHVQTDDKAIDVAIVPPAQADAEKGTNPEQLFAAGYASCFNGAFDLILKQNKVRGAEPEVTLTVRLEDDPEAESPKLSVSIDAKVKNVLSQEEAEKYLQDAHEFCPYSKATRGNIEVDLNVAVVD.

The segment at 1-20 (MAVNYETKATNTGGRNGHVQ) is disordered.

The protein belongs to the OsmC/Ohr family.

In Staphylococcus saprophyticus subsp. saprophyticus (strain ATCC 15305 / DSM 20229 / NCIMB 8711 / NCTC 7292 / S-41), this protein is Organic hydroperoxide resistance protein-like 1.